The chain runs to 129 residues: Acyl carrier protein 2, chloroplastic (129 aa).

Residues M1 to A49 constitute a chloroplast transit peptide. The Carrier domain maps to K52–V127. O-(pantetheine 4'-phosphoryl)serine is present on S87.

It belongs to the acyl carrier protein (ACP) family. In terms of processing, 4'-phosphopantetheine is transferred from CoA to a specific serine of apo-ACP by acpS. This modification is essential for activity because fatty acids are bound in thioester linkage to the sulfhydryl of the prosthetic group.

It is found in the plastid. It localises to the chloroplast. It participates in lipid metabolism; fatty acid biosynthesis. Its function is as follows. Carrier of the growing fatty acid chain in fatty acid biosynthesis. This Hordeum vulgare (Barley) protein is Acyl carrier protein 2, chloroplastic (ACL1.2).